We begin with the raw amino-acid sequence, 137 residues long: Methylglyoxal synthase (137 aa).

The 137-residue stretch at 1-137 (MKIALIAHDK…DLLRGEEPNV (137 aa)) folds into the MGS-like domain. Substrate contacts are provided by residues H8, K12, 34–37 (TGTT), and 54–55 (SG). D60 serves as the catalytic Proton donor/acceptor. H87 lines the substrate pocket.

Belongs to the methylglyoxal synthase family.

The catalysed reaction is dihydroxyacetone phosphate = methylglyoxal + phosphate. Its function is as follows. Catalyzes the formation of methylglyoxal from dihydroxyacetone phosphate. The sequence is that of Methylglyoxal synthase from Bacillus subtilis (strain 168).